The sequence spans 338 residues: E3 ubiquitin-protein ligase RING1 (338 aa).

The disordered stretch occupies residues 102 to 124; the sequence is TTTSSSASIDPNNPSLSGPTRSG. The segment covering 110–121 has biased composition (polar residues); it reads IDPNNPSLSGPT. The RING-type; atypical zinc-finger motif lies at 224 to 265; that stretch reads CAVCMDDFEEGTEAKQMPCKHLYHKDCLLPWLELHNSCPVCR. 2 stretches are compositionally biased toward basic and acidic residues: residues 267–279 and 298–309; these read ELPT…ERRV and SDGDNRTVERSF. Residues 267-338 form a disordered region; it reads ELPTDDPDYE…NAETRQEDLD (72 aa).

In terms of processing, auto-ubiquitinated as part of the enzymatic reaction. In terms of tissue distribution, mostly expressed in cotton fibers, and, to a lower extent, in leaves and flowers.

The catalysed reaction is S-ubiquitinyl-[E2 ubiquitin-conjugating enzyme]-L-cysteine + [acceptor protein]-L-lysine = [E2 ubiquitin-conjugating enzyme]-L-cysteine + N(6)-ubiquitinyl-[acceptor protein]-L-lysine.. It functions in the pathway protein modification; protein ubiquitination. E3 ubiquitin-protein ligase which accepts ubiquitin from an E2 ubiquitin-conjugating enzyme in the form of a thioester and then directly transfers the ubiquitin to targeted substrates. Promotes polyubiquitination of target proteins. This Gossypium hirsutum (Upland cotton) protein is E3 ubiquitin-protein ligase RING1 (RING1).